The sequence spans 521 residues: Bifunctional purine biosynthesis protein PurH (521 aa).

The region spanning 1 to 145 is the MGS-like domain; the sequence is MIKQALISVS…KNHRDVTVVV (145 aa).

Belongs to the PurH family.

The catalysed reaction is (6R)-10-formyltetrahydrofolate + 5-amino-1-(5-phospho-beta-D-ribosyl)imidazole-4-carboxamide = 5-formamido-1-(5-phospho-D-ribosyl)imidazole-4-carboxamide + (6S)-5,6,7,8-tetrahydrofolate. The enzyme catalyses IMP + H2O = 5-formamido-1-(5-phospho-D-ribosyl)imidazole-4-carboxamide. It functions in the pathway purine metabolism; IMP biosynthesis via de novo pathway; 5-formamido-1-(5-phospho-D-ribosyl)imidazole-4-carboxamide from 5-amino-1-(5-phospho-D-ribosyl)imidazole-4-carboxamide (10-formyl THF route): step 1/1. Its pathway is purine metabolism; IMP biosynthesis via de novo pathway; IMP from 5-formamido-1-(5-phospho-D-ribosyl)imidazole-4-carboxamide: step 1/1. The protein is Bifunctional purine biosynthesis protein PurH of Burkholderia orbicola (strain AU 1054).